Reading from the N-terminus, the 356-residue chain is Transcription elongation factor, mitochondrial (356 aa).

The N-terminal 35 residues, 1 to 35, are a transit peptide targeting the mitochondrion; sequence MTVPSLLLAGGRWRCFPLPLASSLFQALHNSCCRK.

The protein belongs to the TEFM family. As to quaternary structure, interacts with POLRMT.

The protein resides in the mitochondrion matrix. It localises to the mitochondrion nucleoid. In terms of biological role, transcription elongation factor which increases mitochondrial RNA polymerase processivity. Regulates transcription of the mitochondrial genome, including genes important for the oxidative phosphorylation machinery. This chain is Transcription elongation factor, mitochondrial (TEFM), found in Bos taurus (Bovine).